The following is a 276-amino-acid chain: Putative respiratory nitrate reductase heme subunit ORF7 (276 aa).

Heme b contacts are provided by Met-138 and Lys-228.

As to quaternary structure, probable multiprotein complex; a catalytic heterodimer of an alpha and beta chain is proposed to associate with additional subunits involved in membrane attachment and electron transfer. Heme b is required as a cofactor.

The protein resides in the cell membrane. Functionally, the respiratory membrane-bound nitrate reductase enzyme complex plays a role in generation of metabolic energy by using nitrate as a terminal electron acceptor during anaerobic conditions. May transfer electrons to the iron-sulfur centers of the catalytic beta subunit. The polypeptide is Putative respiratory nitrate reductase heme subunit ORF7 (Haloferax mediterranei (strain ATCC 33500 / DSM 1411 / JCM 8866 / NBRC 14739 / NCIMB 2177 / R-4) (Halobacterium mediterranei)).